Here is a 343-residue protein sequence, read N- to C-terminus: Cytosolic Fe-S cluster assembly factor CFD1 (343 aa).

Glycine 15–serine 22 is a binding site for ATP. Composition is skewed to polar residues over residues proline 80–alanine 91 and glutamate 99–glutamine 110. Residues proline 80 to glutamine 110 are disordered. Residues cysteine 241 and cysteine 244 each contribute to the [4Fe-4S] cluster site.

This sequence belongs to the Mrp/NBP35 ATP-binding proteins family. NUBP2/CFD1 subfamily. In terms of assembly, heterotetramer of 2 NBP35 and 2 CFD1 chains. It depends on [4Fe-4S] cluster as a cofactor.

The protein resides in the cytoplasm. Component of the cytosolic iron-sulfur (Fe/S) protein assembly (CIA) machinery. Required for maturation of extramitochondrial Fe-S proteins. The NBP35-CFD1 heterotetramer forms a Fe-S scaffold complex, mediating the de novo assembly of an Fe-S cluster and its transfer to target apoproteins. The protein is Cytosolic Fe-S cluster assembly factor CFD1 of Coccidioides immitis (strain RS) (Valley fever fungus).